Reading from the N-terminus, the 359-residue chain is Dihydroorotate dehydrogenase (quinone) (359 aa).

Residues 68 to 72 (AGFDK) and Thr-92 each bind FMN. Lys-72 serves as a coordination point for substrate. 117 to 121 (NRMGF) is a binding site for substrate. Residues Asn-145 and Asn-176 each coordinate FMN. Substrate is bound at residue Asn-176. Residue Ser-179 is the Nucleophile of the active site. Asn-181 contacts substrate. Lys-212 and Thr-240 together coordinate FMN. 241 to 242 (NT) contributes to the substrate binding site. Residues Gly-266, Gly-295, and 316–317 (YT) each bind FMN.

The protein belongs to the dihydroorotate dehydrogenase family. Type 2 subfamily. In terms of assembly, monomer. Requires FMN as cofactor.

The protein localises to the cell membrane. The catalysed reaction is (S)-dihydroorotate + a quinone = orotate + a quinol. It participates in pyrimidine metabolism; UMP biosynthesis via de novo pathway; orotate from (S)-dihydroorotate (quinone route): step 1/1. In terms of biological role, catalyzes the conversion of dihydroorotate to orotate with quinone as electron acceptor. This chain is Dihydroorotate dehydrogenase (quinone), found in Corynebacterium striatum.